The following is a 316-amino-acid chain: Acetaldehyde dehydrogenase (316 aa).

Residue 13–16 (SGNI) coordinates NAD(+). Cys131 acts as the Acyl-thioester intermediate in catalysis. NAD(+) contacts are provided by residues 162 to 170 (SAGPGTRAN) and Asn290.

This sequence belongs to the acetaldehyde dehydrogenase family.

It carries out the reaction acetaldehyde + NAD(+) + CoA = acetyl-CoA + NADH + H(+). Catalyzes the conversion of acetaldehyde to acetyl-CoA, using NAD(+) and coenzyme A. Is the final enzyme in the meta-cleavage pathway for the degradation of 2-aminophenol. The protein is Acetaldehyde dehydrogenase (amnH) of Pseudomonas sp.